The primary structure comprises 346 residues: NADH-quinone oxidoreductase subunit H (346 aa).

The next 8 membrane-spanning stretches (helical) occupy residues 6–26 (ILFW…ACAY), 76–96 (IMYL…WSVV), 128–148 (ILFL…AGWA), 166–186 (ISYE…TGSL), 198–218 (LWNI…VAMF), 260–280 (ITMS…PFGI), 289–309 (LFGL…FVWV), and 324–344 (LGWK…SLYI).

Belongs to the complex I subunit 1 family. NDH-1 is composed of 14 different subunits. Subunits NuoA, H, J, K, L, M, N constitute the membrane sector of the complex.

The protein localises to the cell inner membrane. The enzyme catalyses a quinone + NADH + 5 H(+)(in) = a quinol + NAD(+) + 4 H(+)(out). NDH-1 shuttles electrons from NADH, via FMN and iron-sulfur (Fe-S) centers, to quinones in the respiratory chain. The immediate electron acceptor for the enzyme in this species is believed to be ubiquinone. Couples the redox reaction to proton translocation (for every two electrons transferred, four hydrogen ions are translocated across the cytoplasmic membrane), and thus conserves the redox energy in a proton gradient. This subunit may bind ubiquinone. In Leptospira borgpetersenii serovar Hardjo-bovis (strain JB197), this protein is NADH-quinone oxidoreductase subunit H.